Consider the following 103-residue polypeptide: Large ribosomal subunit protein bL21 (103 aa).

This sequence belongs to the bacterial ribosomal protein bL21 family. In terms of assembly, part of the 50S ribosomal subunit. Contacts protein L20.

This protein binds to 23S rRNA in the presence of protein L20. The sequence is that of Large ribosomal subunit protein bL21 from Methylococcus capsulatus (strain ATCC 33009 / NCIMB 11132 / Bath).